The primary structure comprises 201 residues: Glycerol-3-phosphate acyltransferase (201 aa).

The next 5 membrane-spanning stretches (helical) occupy residues Leu9–Ile29, Leu60–Ser80, Ala86–Phe106, Leu116–Val136, and Ile153–Ile173.

Belongs to the PlsY family. As to quaternary structure, probably interacts with PlsX.

The protein localises to the cell inner membrane. The catalysed reaction is an acyl phosphate + sn-glycerol 3-phosphate = a 1-acyl-sn-glycero-3-phosphate + phosphate. Its pathway is lipid metabolism; phospholipid metabolism. Catalyzes the transfer of an acyl group from acyl-phosphate (acyl-PO(4)) to glycerol-3-phosphate (G3P) to form lysophosphatidic acid (LPA). This enzyme utilizes acyl-phosphate as fatty acyl donor, but not acyl-CoA or acyl-ACP. The polypeptide is Glycerol-3-phosphate acyltransferase (Brucella anthropi (strain ATCC 49188 / DSM 6882 / CCUG 24695 / JCM 21032 / LMG 3331 / NBRC 15819 / NCTC 12168 / Alc 37) (Ochrobactrum anthropi)).